The sequence spans 166 residues: Glycine cleavage system H protein 3, mitochondrial (166 aa).

The N-terminal 35 residues, 1–35 (MALRMWASSTANALKLSSSASKSHLLPAFSISRCF), are a transit peptide targeting the mitochondrion. The 83-residue stretch at 57–139 (VATIGITDHA…YEDGWMIKVK (83 aa)) folds into the Lipoyl-binding domain. Lys98 bears the N6-lipoyllysine mark. The residue at position 141 (Ser141) is a Phosphoserine.

The protein belongs to the GcvH family. The glycine cleavage system is composed of four proteins: P, T, L and H. The cofactor is (R)-lipoate. Post-translationally, S-nitrosylated and/or glutathionylated at unknown positions in response to nitric oxide.

The protein resides in the mitochondrion. Inhibited by harpin, S-nitrosoglutathione (GSNO), nitric oxide, N-ethylmaleimide and 5,5'-dithiobis-(2-nitrobenzoic acid). Functionally, the glycine decarboxylase (GDC) or glycine cleavage system catalyzes the degradation of glycine. The H protein shuttles the methylamine group of glycine from the P protein to the T protein. In Arabidopsis thaliana (Mouse-ear cress), this protein is Glycine cleavage system H protein 3, mitochondrial (GDH3).